Consider the following 103-residue polypeptide: Serine rich endogenous peptide 9 (103 aa).

Positions 1 to 25 (MENIFFSKLTQVFIVALLCIFIYRT) are cleaved as a signal peptide. The segment at 54–103 (IYVKPPPLKSKDSNQKGKRGETYYKPNSEIGTGPSHSGHGGSSIEHVSSP) is disordered. Basic and acidic residues predominate over residues 62 to 75 (KSKDSNQKGKRGET). Residues 82–96 (EIGTGPSHSGHGGSS) carry the SCOOP motif motif. The segment covering 84–103 (GTGPSHSGHGGSSIEHVSSP) has biased composition (low complexity). A SxS motif essential for MIK2 binding motif is present at residues 88–90 (SHS).

Belongs to the serine rich endogenous peptide (SCOOP) phytocytokine family. In terms of assembly, interacts with MIK2 (via extracellular leucine-rich repeat domain); this interaction triggers the formation of complex between MIK2 and the BAK1/SERK3 and SERK4 coreceptors, and subsequent BAK1 activation by phosphorylation. Mostly expressed in seedlings shoots and roots, and, to a lower extent, in leaves, but barely in flowers.

It is found in the cell membrane. Its subcellular location is the secreted. The protein resides in the extracellular space. The protein localises to the apoplast. Its function is as follows. Brassicaceae-specific phytocytokine (plant endogenous peptide released into the apoplast) perceived by MIK2 in a BAK1/SERK3 and SERK4 coreceptors-dependent manner, that modulates various physiological and antimicrobial processes including growth prevention and reactive oxygen species (ROS) response regulation. This is Serine rich endogenous peptide 9 from Arabidopsis thaliana (Mouse-ear cress).